A 298-amino-acid polypeptide reads, in one-letter code: Probable endonuclease 4 (298 aa).

Histidine 69, histidine 111, glutamate 146, aspartate 180, histidine 183, histidine 215, aspartate 228, histidine 230, and glutamate 260 together coordinate Zn(2+).

Belongs to the AP endonuclease 2 family. Zn(2+) is required as a cofactor.

The catalysed reaction is Endonucleolytic cleavage to 5'-phosphooligonucleotide end-products.. Endonuclease IV plays a role in DNA repair. It cleaves phosphodiester bonds at apurinic or apyrimidinic (AP) sites, generating a 3'-hydroxyl group and a 5'-terminal sugar phosphate. The protein is Probable endonuclease 4 of Bacillus cereus (strain 03BB102).